A 37-amino-acid chain; its full sequence is Cellular retinoic acid-binding protein 2 (37 aa).

A Nuclear localization signal motif is present at residues 21–31 (KALGVNMMLRK).

This sequence belongs to the calycin superfamily. Fatty-acid binding protein (FABP) family. Embryo.

Its subcellular location is the cytoplasm. The protein localises to the endoplasmic reticulum. It localises to the nucleus. Its function is as follows. Transports retinoic acid to the nucleus. Regulates the access of retinoic acid to the nuclear retinoic acid receptors. This chain is Cellular retinoic acid-binding protein 2 (CRABP2), found in Gallus gallus (Chicken).